A 229-amino-acid polypeptide reads, in one-letter code: Ribonuclease 3 (229 aa).

Positions 5–127 (LSRLERQLGY…LIGAIYLDAG (123 aa)) constitute an RNase III domain. Mg(2+) is bound at residue E40. The active site involves D44. Mg(2+)-binding residues include D113 and E116. E116 is a catalytic residue. Positions 154–224 (DPKTRLQEFL…AAAALIALGV (71 aa)) constitute a DRBM domain.

Belongs to the ribonuclease III family. As to quaternary structure, homodimer. Mg(2+) serves as cofactor.

It is found in the cytoplasm. It catalyses the reaction Endonucleolytic cleavage to 5'-phosphomonoester.. In terms of biological role, digests double-stranded RNA. Involved in the processing of primary rRNA transcript to yield the immediate precursors to the large and small rRNAs (23S and 16S). Processes some mRNAs, and tRNAs when they are encoded in the rRNA operon. Processes pre-crRNA and tracrRNA of type II CRISPR loci if present in the organism. The sequence is that of Ribonuclease 3 from Pseudomonas fluorescens (strain ATCC BAA-477 / NRRL B-23932 / Pf-5).